The sequence spans 125 residues: Large ribosomal subunit protein bL12 (125 aa).

Belongs to the bacterial ribosomal protein bL12 family. As to quaternary structure, homodimer. Part of the ribosomal stalk of the 50S ribosomal subunit. Forms a multimeric L10(L12)X complex, where L10 forms an elongated spine to which 2 to 4 L12 dimers bind in a sequential fashion. Binds GTP-bound translation factors.

Forms part of the ribosomal stalk which helps the ribosome interact with GTP-bound translation factors. Is thus essential for accurate translation. This is Large ribosomal subunit protein bL12 from Thermoanaerobacter sp. (strain X514).